A 328-amino-acid polypeptide reads, in one-letter code: Tetraacyldisaccharide 4'-kinase (328 aa).

ATP is bound at residue 55 to 62; that stretch reads TAGGNGKT.

The protein belongs to the LpxK family.

The catalysed reaction is lipid A disaccharide (E. coli) + ATP = lipid IVA (E. coli) + ADP + H(+). The protein operates within glycolipid biosynthesis; lipid IV(A) biosynthesis; lipid IV(A) from (3R)-3-hydroxytetradecanoyl-[acyl-carrier-protein] and UDP-N-acetyl-alpha-D-glucosamine: step 6/6. In terms of biological role, transfers the gamma-phosphate of ATP to the 4'-position of a tetraacyldisaccharide 1-phosphate intermediate (termed DS-1-P) to form tetraacyldisaccharide 1,4'-bis-phosphate (lipid IVA). The protein is Tetraacyldisaccharide 4'-kinase (lpxK) of Escherichia coli (strain K12).